The chain runs to 492 residues: MSKAVGDLGLVGLAVMGQNLILNAADHGFTVVAYNRTQSKVDRFLANEAKGKSIIGATSIEDLVAKLKKPRKIMLLIKAGAPVDTLIKELVPHLDKGDIIIDGGNSHFPDTNRRYEELTKQGILFVGSGVSGGEDGARFGPSLMPGGSAEAWPHIKNIFQSIAAKSNGEPCCEWVGPAGSGHYVKMVHNGIEYGDMQLICEAYDIMKRIGRFTDKEISEVFDKWNTGVLDSFLIEITRDILKFDDVDGKPLVEKIMDTAGQKGTGKWTAINALDLGMPVTLIGEAVFARCLSAIKDERKRASKLLAGPTVPKDAIHDREQFVYDLEQALYASKIISYAQGFMLIREAARSYGWKLNNPAIALMWRGGCIIRSVFLAEITKAYRDDPDLENLLFNEFFASAVTKAQSGWRRTIALAATYGIPTPAFSTALAFYDGYRSERLPANLLQAQRDYFGAHTFRILPECASAHLPVDKDIHINWTGHGGNISSSTYQA.

Residues 12-17 (GLAVMG), 35-37 (NRT), 77-79 (IKA), and asparagine 105 contribute to the NADP(+) site. Substrate is bound by residues asparagine 105 and 131-133 (SGG). Lysine 185 (proton acceptor) is an active-site residue. Position 188-189 (188-189 (HN)) interacts with substrate. The Proton donor role is filled by glutamate 192. Residues tyrosine 193, lysine 262, arginine 289, arginine 449, and histidine 455 each contribute to the substrate site.

It belongs to the 6-phosphogluconate dehydrogenase family. As to quaternary structure, homodimer.

It catalyses the reaction 6-phospho-D-gluconate + NADP(+) = D-ribulose 5-phosphate + CO2 + NADPH. Its pathway is carbohydrate degradation; pentose phosphate pathway; D-ribulose 5-phosphate from D-glucose 6-phosphate (oxidative stage): step 3/3. Its function is as follows. Catalyzes the oxidative decarboxylation of 6-phosphogluconate to ribulose 5-phosphate and CO(2), with concomitant reduction of NADP to NADPH. The protein is 6-phosphogluconate dehydrogenase, decarboxylating 2 (GND2) of Saccharomyces cerevisiae (strain ATCC 204508 / S288c) (Baker's yeast).